The following is a 280-amino-acid chain: Killer cell lectin-like receptor 7 (280 aa).

Over 1–44 (MSEQEVTYSTVRFHESSRLQKLVRTEEPQRPREACYREYSVPWK) the chain is Cytoplasmic. A helical; Signal-anchor for type II membrane protein membrane pass occupies residues 45-66 (LIVIACGILCFLLLVTVALLAI). The Extracellular portion of the chain corresponds to 67-280 (TIFQHSQQKH…CGKRLDKFPH (214 aa)). N104 carries an N-linked (GlcNAc...) asparagine glycan. Residues 156–275 (GFEKYWFCYG…SYICICGKRL (120 aa)) form the C-type lectin domain. 4 disulfides stabilise this stretch: C163–C168, C181–C269, C185–C271, and C250–C263. An N-linked (GlcNAc...) asparagine glycan is attached at N239.

In terms of assembly, homodimer; disulfide-linked.

It localises to the membrane. Functionally, receptor on natural killer (NK) cells for class I MHC. This is Killer cell lectin-like receptor 7 (Klra7) from Mus musculus (Mouse).